We begin with the raw amino-acid sequence, 394 residues long: Elongation factor Tu (394 aa).

A tr-type G domain is found at Lys-10–Val-204. Positions Gly-19 to Thr-26 are G1. Gly-19–Thr-26 is a GTP binding site. Residue Thr-26 participates in Mg(2+) binding. The tract at residues Gly-60–Ser-64 is G2. A G3 region spans residues Asp-81–Gly-84. Residues Asp-81–His-85 and Asn-136–Asp-139 contribute to the GTP site. The segment at Asn-136–Asp-139 is G4. Residues Ser-174–Leu-176 form a G5 region.

The protein belongs to the TRAFAC class translation factor GTPase superfamily. Classic translation factor GTPase family. EF-Tu/EF-1A subfamily. As to quaternary structure, monomer.

It localises to the cytoplasm. It catalyses the reaction GTP + H2O = GDP + phosphate + H(+). In terms of biological role, GTP hydrolase that promotes the GTP-dependent binding of aminoacyl-tRNA to the A-site of ribosomes during protein biosynthesis. In Rickettsia conorii (strain ATCC VR-613 / Malish 7), this protein is Elongation factor Tu.